We begin with the raw amino-acid sequence, 978 residues long: NACHT, LRR and PYD domains-containing protein 4E (978 aa).

The Pyrin domain occupies 1 to 93 (MASFFSDFGL…MERAGREIAG (93 aa)). Residues 148-471 (HMVFLQGVAG…FHLLKSHVDH (324 aa)) form the NACHT domain. An ATP-binding site is contributed by 154 to 161 (GVAGIGKS). LRR repeat units lie at residues 594–617 (CSTLKKLSLSTQNILSEGQEHSYT), 694–717 (LLNLSLTFLSHNDVKLLCDVLNQA), 746–773 (SKMLKHLNLSSNNLDKGISSLSKALCHP), 802–825 (NKTLTHLDISFNDLKDEGLKVLCG), 859–882 (NQNLRNLQISNNKIEDAGVKLLCD), and 916–940 (CKTLLGINLQENALDHSGLVALFEA).

This sequence belongs to the NLRP family.

Functionally, may be involved in inflammation and recognition of cytosolic pathogen-associated molecular patterns (PAMPs) not intercepted by membrane-bound receptors. The sequence is that of NACHT, LRR and PYD domains-containing protein 4E (Nlrp4e) from Mus musculus (Mouse).